The chain runs to 439 residues: Acyl-lipid (8-3)-desaturase (439 aa).

Residues 7–88 (GRSAAREMTA…LPKLDASKVE (82 aa)) enclose the Cytochrome b5 heme-binding domain. The heme site is built by His40 and His66. The helical transmembrane segment at 123–143 (IPHMIYRVVEIVALFALSFWL) threads the bilayer. Positions 171-175 (HEMGH) match the Histidine box-1 motif. The Histidine box-2 motif lies at 208-213 (HSKHHA). Helical transmembrane passes span 254–274 (AYLF…LYLH), 287–307 (FVWI…LGYS), and 312–332 (VGMY…QFAV). The short motif at 376 to 380 (QIEHH) is the Histidine box-3 element.

This sequence belongs to the fatty acid desaturase type 1 family. It depends on Fe(2+) as a cofactor.

Its subcellular location is the membrane. It carries out the reaction an (8Z,11Z,14Z)-icosatrienoyl-containing glycerolipid + 2 Fe(II)-[cytochrome b5] + O2 + 2 H(+) = (5Z,8Z,11Z,14Z)-eicosatetraenoyl-containing glycerolipid + 2 Fe(III)-[cytochrome b5] + 2 H2O. The enzyme catalyses an (8Z,11Z,14Z,17Z)-eicosatetraenoyl-containing glycerolipid + 2 Fe(II)-[cytochrome b5] + O2 + 2 H(+) = a (5Z,8Z,11Z,14Z,17Z)-eicosapentaenoyl-containing glycerolipid + 2 Fe(III)-[cytochrome b5] + 2 H2O. Fatty acid desaturase that introduces a cis double bond at the 5-position in 20-carbon polyunsaturated fatty acids incorporated in a glycerolipid that contain a Delta(8) double bond. In Thraustochytrium sp, this protein is Acyl-lipid (8-3)-desaturase.